A 219-amino-acid chain; its full sequence is Large ribosomal subunit protein uL3 (219 aa).

The segment covering 133-145 has biased composition (polar residues); sequence GRASHGNSRSHNV. Positions 133-153 are disordered; that stretch reads GRASHGNSRSHNVPGSIGMAQ. Gln-153 is subject to N5-methylglutamine.

This sequence belongs to the universal ribosomal protein uL3 family. Part of the 50S ribosomal subunit. Forms a cluster with proteins L14 and L19. Post-translationally, methylated by PrmB.

Functionally, one of the primary rRNA binding proteins, it binds directly near the 3'-end of the 23S rRNA, where it nucleates assembly of the 50S subunit. The sequence is that of Large ribosomal subunit protein uL3 from Paraburkholderia phymatum (strain DSM 17167 / CIP 108236 / LMG 21445 / STM815) (Burkholderia phymatum).